We begin with the raw amino-acid sequence, 443 residues long: Signal recognition particle 54 kDa protein (443 aa).

Residues 107–114, 189–193, and 247–250 each bind GTP; these read GVQGSGKT, DTAGR, and TKLD.

This sequence belongs to the GTP-binding SRP family. SRP54 subfamily. Part of the signal recognition particle protein translocation system, which is composed of SRP and FtsY. Archaeal SRP consists of a 7S RNA molecule of 300 nucleotides and two protein subunits: SRP54 and SRP19.

It is found in the cytoplasm. It catalyses the reaction GTP + H2O = GDP + phosphate + H(+). Involved in targeting and insertion of nascent membrane proteins into the cytoplasmic membrane. Binds to the hydrophobic signal sequence of the ribosome-nascent chain (RNC) as it emerges from the ribosomes. The SRP-RNC complex is then targeted to the cytoplasmic membrane where it interacts with the SRP receptor FtsY. This is Signal recognition particle 54 kDa protein from Pyrococcus abyssi (strain GE5 / Orsay).